Here is a 403-residue protein sequence, read N- to C-terminus: Phosphopentomutase (403 aa).

Positions 13, 298, 303, 339, 340, and 351 each coordinate Mn(2+).

Belongs to the phosphopentomutase family. Requires Mn(2+) as cofactor.

Its subcellular location is the cytoplasm. It catalyses the reaction 2-deoxy-alpha-D-ribose 1-phosphate = 2-deoxy-D-ribose 5-phosphate. The enzyme catalyses alpha-D-ribose 1-phosphate = D-ribose 5-phosphate. Its pathway is carbohydrate degradation; 2-deoxy-D-ribose 1-phosphate degradation; D-glyceraldehyde 3-phosphate and acetaldehyde from 2-deoxy-alpha-D-ribose 1-phosphate: step 1/2. Its function is as follows. Isomerase that catalyzes the conversion of deoxy-ribose 1-phosphate (dRib-1-P) and ribose 1-phosphate (Rib-1-P) to deoxy-ribose 5-phosphate (dRib-5-P) and ribose 5-phosphate (Rib-5-P), respectively. This chain is Phosphopentomutase, found in Streptococcus pyogenes serotype M28 (strain MGAS6180).